Reading from the N-terminus, the 103-residue chain is Large ribosomal subunit protein bL21 (103 aa).

The protein belongs to the bacterial ribosomal protein bL21 family. As to quaternary structure, part of the 50S ribosomal subunit. Contacts protein L20.

This protein binds to 23S rRNA in the presence of protein L20. The sequence is that of Large ribosomal subunit protein bL21 from Pseudomonas fluorescens (strain Pf0-1).